The following is a 793-amino-acid chain: Putative potassium transporter 12 (793 aa).

The Cytoplasmic segment spans residues 1 to 54 (MASISDSETTNHGSIWDLDQNLDQPMDEEASRLKNMYTEKKFSSILLLRLAFQS). Residues 55-75 (LGVVFGDLGTSPLYVFYNIFP) form a helical membrane-spanning segment. Over 76–87 (HGVDDDEDVIGA) the chain is Extracellular. The chain crosses the membrane as a helical span at residues 88–108 (LSLIIYTLTLIPLMKYVFVVL). Residues 109-175 (RANDNGQGGT…EGHVYKKNCL (67 aa)) are Cytoplasmic-facing. The helical transmembrane segment at 176–196 (LILVLIGTCTAIGDGILTPAI) threads the bilayer. Residues 197-215 (SVLSASGGIRVQNQKMSTD) are Extracellular-facing. Residues 216–236 (VVVVVAVIILIGLFSMQHYGT) traverse the membrane as a helical segment. Residues 237–238 (DK) are Cytoplasmic-facing. The chain crosses the membrane as a helical span at residues 239 to 259 (VGWLFAPIVLLWFILIGTIGA). Residues 260 to 289 (LNIHKYNSSVLKAYNPVYIYRYFRRGKSES) lie on the Extracellular side of the membrane. N-linked (GlcNAc...) asparagine glycosylation occurs at Asn266. A helical membrane pass occupies residues 290–310 (WTSLGGIMLSITGTEALYADL). Residues 311 to 315 (CHFPV) lie on the Cytoplasmic side of the membrane. The helical transmembrane segment at 316–338 (LAIQIAFTLVVFPCLLLAYTGQA) threads the bilayer. Residues 339–359 (AYIISNKDHVVDAFYRSIPDT) lie on the Extracellular side of the membrane. A helical transmembrane segment spans residues 360–380 (IYWPVFIIATLAAIVASQATI). At 381–411 (SATYSIIKQALALGCFPRVSVVHTSKKFLGQ) the chain is on the cytoplasmic side. Residues 412-432 (IYIPDINWVLMILCIAVTAGF) traverse the membrane as a helical segment. Residues 433–444 (KNQSQIGNAYGT) lie on the Extracellular side of the membrane. An N-linked (GlcNAc...) asparagine glycan is attached at Asn434. The chain crosses the membrane as a helical span at residues 445–465 (AVVIVMLVTTFLMVPIMLLVW). Topologically, residues 466-468 (KSH) are cytoplasmic. The helical transmembrane segment at 469–489 (WILVVIFIVLSLMVELPYFTA) threads the bilayer. Residues 490–496 (CINKVDQ) lie on the Extracellular side of the membrane. The chain crosses the membrane as a helical span at residues 497–517 (GGWVPLVVATTCFIIMYVWHF). Residues 518–793 (CTVKRYEFEM…LLNVGQIYYI (276 aa)) lie on the Cytoplasmic side of the membrane.

Belongs to the HAK/KUP transporter (TC 2.A.72.3) family.

It localises to the membrane. Functionally, high-affinity potassium transporter. The sequence is that of Putative potassium transporter 12 (HAK12) from Oryza sativa subsp. japonica (Rice).